The primary structure comprises 393 residues: Thermostable carboxypeptidase 2 (393 aa).

Zn(2+) contacts are provided by His104, Asp109, and His245. Tyr302 functions as the Proton donor in the catalytic mechanism. Residue Glu373 is the Nucleophile of the active site.

The protein belongs to the peptidase M20 family. Homotetramer. It depends on Zn(2+) as a cofactor.

In terms of biological role, can release basic, acidic, aromatic, and, to a lesser extent, aliphatic amino acids. In Saccharolobus solfataricus (strain ATCC 35092 / DSM 1617 / JCM 11322 / P2) (Sulfolobus solfataricus), this protein is Thermostable carboxypeptidase 2 (cpsA2).